A 476-amino-acid chain; its full sequence is Cysteine--tRNA ligase (476 aa).

A Zn(2+)-binding site is contributed by Cys-36. The 'HIGH' region motif lies at 38 to 48; it reads PTVYDYAHIGN. Residues Cys-221, His-246, and Glu-250 each coordinate Zn(2+). The 'KMSKS' region motif lies at 278–282; the sequence is KMSKS. Lys-281 is an ATP binding site.

This sequence belongs to the class-I aminoacyl-tRNA synthetase family. In terms of assembly, monomer. It depends on Zn(2+) as a cofactor.

It localises to the cytoplasm. The catalysed reaction is tRNA(Cys) + L-cysteine + ATP = L-cysteinyl-tRNA(Cys) + AMP + diphosphate. The chain is Cysteine--tRNA ligase from Chlamydia abortus (strain DSM 27085 / S26/3) (Chlamydophila abortus).